Here is a 179-residue protein sequence, read N- to C-terminus: Large ribosomal subunit protein uL5 (179 aa).

Belongs to the universal ribosomal protein uL5 family. In terms of assembly, part of the 50S ribosomal subunit; part of the 5S rRNA/L5/L18/L25 subcomplex. Contacts the 5S rRNA and the P site tRNA. Forms a bridge to the 30S subunit in the 70S ribosome.

This is one of the proteins that bind and probably mediate the attachment of the 5S RNA into the large ribosomal subunit, where it forms part of the central protuberance. In the 70S ribosome it contacts protein S13 of the 30S subunit (bridge B1b), connecting the 2 subunits; this bridge is implicated in subunit movement. Contacts the P site tRNA; the 5S rRNA and some of its associated proteins might help stabilize positioning of ribosome-bound tRNAs. This chain is Large ribosomal subunit protein uL5, found in Shouchella clausii (strain KSM-K16) (Alkalihalobacillus clausii).